The chain runs to 177 residues: PBAN-type neuropeptides (177 aa).

Positions 1 to 23 (MIVTGNPVCAIALLLCLVFRASG) are cleaved as a signal peptide. The propeptide occupies 24–54 (EYELEMSSGGSNDGRSPSNDFGSCTDGKCTK). Residues 28–73 (EMSSGGSNDGRSPSNDFGSCTDGKCTKRTTTTQESGISSGMWFGPR) are disordered. Residues 31–45 (SGGSNDGRSPSNDFG) are compositionally biased toward polar residues. The span at 47 to 59 (CTDGKCTKRTTTT) shows a compositional bias: low complexity. Leu74 is modified (leucine amide). A propeptide spanning residues 78–113 (HKSNEKQQINPEIEMLVNALDQPGMRWTVITIPANE) is cleaved from the precursor. 3 positions are modified to leucine amide: Leu124, Leu154, and Leu166. Positions 169-177 (QSRSVSRKI) are excised as a propeptide.

Belongs to the pyrokinin family. Pyrokinins (PK) 1 to 4 are expressed in the retrocerebral complex. PK 1 is expressed in central brain, anntennal lobes and abominal ganglia. PK 2 is expressed in optical lobes and in gnathal, thoracic and abdominal ganglia. PK 3 is expressed in optical lobes and in thoracic and abdominal ganglia (at protein level).

It is found in the secreted. Functionally, pyrokinins mediate visceral muscle contractile activity (myotropic activity). The protein is PBAN-type neuropeptides of Camponotus floridanus (Florida carpenter ant).